Here is a 312-residue protein sequence, read N- to C-terminus: MENYNQTSTDFILLGLFPQSRIGLFVFTLIFLIFLMALIGNLSMILLIFLDIHLHTPMYFLLSQLSLIDLNYISTIVPKMVYDFLYGNKSISFTGCGIQSFFFLTLAVAEGLLLTSMAYDRYVAICFPLHYPIRISKRVCVMMITGSWMISSINSCAHTVYALCIPYCKSRAINHFFCDVPAMLTLACTDTWVYESTVFLSSTIFLVLPFTGIACSYGRVLLAVYRMHSAEGRKKAYSTCSTHLTVVSFYYAPFAYTYVRPRSLRSPTEDKILAVFYTILTPMLNPIIYSLRNKEVMGALTQVIQKIFSVKM.

Residues 1 to 24 lie on the Extracellular side of the membrane; the sequence is MENYNQTSTDFILLGLFPQSRIGL. Asn5 is a glycosylation site (N-linked (GlcNAc...) asparagine). The chain crosses the membrane as a helical span at residues 25–48; that stretch reads FVFTLIFLIFLMALIGNLSMILLI. The Cytoplasmic segment spans residues 49 to 56; sequence FLDIHLHT. The helical transmembrane segment at 57-78 threads the bilayer; that stretch reads PMYFLLSQLSLIDLNYISTIVP. At 79–99 the chain is on the extracellular side; it reads KMVYDFLYGNKSISFTGCGIQ. The N-linked (GlcNAc...) asparagine glycan is linked to Asn88. Cys96 and Cys188 are joined by a disulfide. A helical membrane pass occupies residues 100–119; sequence SFFFLTLAVAEGLLLTSMAY. The Cytoplasmic segment spans residues 120–138; the sequence is DRYVAICFPLHYPIRISKR. A helical transmembrane segment spans residues 139 to 157; that stretch reads VCVMMITGSWMISSINSCA. Topologically, residues 158 to 194 are extracellular; the sequence is HTVYALCIPYCKSRAINHFFCDVPAMLTLACTDTWVY. The helical transmembrane segment at 195-218 threads the bilayer; sequence ESTVFLSSTIFLVLPFTGIACSYG. Over 219-235 the chain is Cytoplasmic; the sequence is RVLLAVYRMHSAEGRKK. The chain crosses the membrane as a helical span at residues 236–258; the sequence is AYSTCSTHLTVVSFYYAPFAYTY. Over 259 to 271 the chain is Extracellular; the sequence is VRPRSLRSPTEDK. Residues 272-291 form a helical membrane-spanning segment; it reads ILAVFYTILTPMLNPIIYSL. Residues 292–312 lie on the Cytoplasmic side of the membrane; that stretch reads RNKEVMGALTQVIQKIFSVKM.

It belongs to the G-protein coupled receptor 1 family.

The protein resides in the cell membrane. Functionally, odorant receptor. This is Olfactory receptor 2L2 (OR2L2) from Homo sapiens (Human).